We begin with the raw amino-acid sequence, 913 residues long: MRPRSGGRPGAPGRRRRRLRRGPRGRRLPPPPPLPLLLGLLLAAAGPGAARAKETAFVEVVLFESSPSGDYTTHTTGLTGRFSRAGAMLSAEGEIVQMHPLGLCNNNDEEDLYEYGWVGVVKLEQPELDPKPCLTVLGKAKRAVQRGATAVIFDVSENPEAIDQLNQGSEDPLKRPVVYVKGADAIKLMNIVNKQKVARARIQHLPPRQPTEYFDMGIFLAFFVVVSLVCLILLVKIKLKQRRSQNSMNRLAVQALEKMETRKFNSKSKGRREGSCGALDTLSSGSTSDCAICLEKYIDGEELRVIPCTHRFHRKCVDPWLLQHHTCPHCRHNIIEQKGNPGAVCVETSNLTRGRQPRVTLPVHYPGRVHRTNAIPAYPTRTSMDSHGNPVTLLTMDRHGEQNLYSPQTPTYVRGYPPLHLDHTLAPHRCSLEHRAYSPAHPFRRPKFSSRSFSKAACFSQYETMYQHYYFQGLSYPEQEGQTIPSVTPRGQSRAFPPSGASSLLFPTMVHVAPPTHVESGSTSSFSCYHGHRSVCSGYLADCPGSDSSSNSSGQCRCSSSDSVVDCTEVSNQGVYGSCSTFRSSLSSDYDPFIYRSRGPAVHLEGSPPPEELPAGHSQSAGRGEPWLGPASPSGDQLSTCSLEMNYSSNSSLEPRGPNSSTSEVGLEVSPGAALDLRRTWKGGPEGPSCACCFEPQPFPPGSGIETSAGGSSLFLGPRLLEDCNPPSGEPQLGSSQGLYGLHSDHYPRTDGVKYEGLPCCFYEEKQVAHSAGRGNGCYTEDYSVSVQYTLTEEPPPSCYAGPRDLSQRIPIIPEDVDCDLGLPQDCHGMHNHSPWGGALSLDVPRLHWSLGTTREEEQAPCYQAEVQPGCSPEEAGASRASLSSAPQDTQESHALAAEASGPGSGPGIGTGA.

Residues 1–32 are disordered; the sequence is MRPRSGGRPGAPGRRRRRLRRGPRGRRLPPPP. A signal peptide spans 1 to 52; sequence MRPRSGGRPGAPGRRRRRLRRGPRGRRLPPPPPLPLLLGLLLAAAGPGAARA. Residues 13–27 show a composition bias toward basic residues; the sequence is GRRRRRLRRGPRGRR. Residues 53–216 are Extracellular-facing; that stretch reads KETAFVEVVL…PRQPTEYFDM (164 aa). The helical transmembrane segment at 217-237 threads the bilayer; that stretch reads GIFLAFFVVVSLVCLILLVKI. Residues 238–913 are Cytoplasmic-facing; that stretch reads KLKQRRSQNS…GSGPGIGTGA (676 aa). The segment at 290–331 adopts an RING-type; atypical zinc-finger fold; it reads CAICLEKYIDGEELRVIPCTHRFHRKCVDPWLLQHHTCPHCR. 2 disordered regions span residues 601 to 669 and 855 to 913; these read AVHL…GLEV and REEE…GTGA. Polar residues-rich tracts occupy residues 634-664 and 881-890; these read SGDQ…STSE and ASLSSAPQDT. Residues 903–913 show a composition bias toward gly residues; sequence PGSGPGIGTGA.

It belongs to the ZNRF3 family. In terms of assembly, interacts with LRP6, FZD4, FZD5, FZD6 and FZD8. Interacts with RSPO1; interaction promotes indirect interaction with LGR4 and membrane clearance of ZNRF3. Interacts with LMBR1L.

It localises to the cell membrane. The catalysed reaction is S-ubiquitinyl-[E2 ubiquitin-conjugating enzyme]-L-cysteine + [acceptor protein]-L-lysine = [E2 ubiquitin-conjugating enzyme]-L-cysteine + N(6)-ubiquitinyl-[acceptor protein]-L-lysine.. It functions in the pathway protein modification; protein ubiquitination. Negatively regulated by R-spondin proteins such as RSPO1: interaction with RSPO1 induces the indirect association between ZNRF3 and LGR4, promoting membrane clearance of ZNRF3. E3 ubiquitin-protein ligase that acts as a negative regulator of the Wnt signaling pathway by mediating the ubiquitination and subsequent degradation of Wnt receptor complex components Frizzled and LRP6. Acts on both canonical and non-canonical Wnt signaling pathway. Acts as a tumor suppressor in the intestinal stem cell zone by inhibiting the Wnt signaling pathway, thereby restricting the size of the intestinal stem cell zone. Along with RSPO2 and RNF43, constitutes a master switch that governs limb specification. The protein is E3 ubiquitin-protein ligase ZNRF3 (Znrf3) of Mus musculus (Mouse).